Reading from the N-terminus, the 102-residue chain is Small ribosomal subunit protein uS10m (102 aa).

Belongs to the universal ribosomal protein uS10 family.

The protein resides in the mitochondrion. This Marchantia polymorpha (Common liverwort) protein is Small ribosomal subunit protein uS10m (RPS10).